Here is a 419-residue protein sequence, read N- to C-terminus: Carboxypeptidase A2 (419 aa).

The N-terminal stretch at 1-18 is a signal peptide; sequence MAMRLILFFGALFGHIYC. The propeptide at 19 to 114 is activation peptide; it reads LETFVGDQVL…EMLFNRRRER (96 aa). The region spanning 122–414 is the Peptidase M14 domain; that stretch reads AYHTLEEISQ…LGLKAIMEHV (293 aa). His-179 and Glu-182 together coordinate Zn(2+). Residues 179-182, Arg-237, and 254-255 each bind substrate; these read HARE and NR. Cys-248 and Cys-271 are oxidised to a cystine. Residue His-306 participates in Zn(2+) binding. 307–308 contacts substrate; the sequence is SY. Cysteines 320 and 354 form a disulfide. Residue Tyr-358 coordinates substrate. The Proton donor/acceptor role is filled by Glu-380.

The protein belongs to the peptidase M14 family. It depends on Zn(2+) as a cofactor.

The protein resides in the secreted. The enzyme catalyses Similar to that of carboxypeptidase A (EC 3.4.17.1), but with a preference for bulkier C-terminal residues.. In terms of biological role, carboxypeptidase that catalyzes the release of a C-terminal amino acid, with a preference for large aromatic C-terminal residues. This Homo sapiens (Human) protein is Carboxypeptidase A2 (CPA2).